The following is a 299-amino-acid chain: 4-hydroxy-tetrahydrodipicolinate synthase (299 aa).

Residue T50 participates in pyruvate binding. The Proton donor/acceptor role is filled by Y139. Catalysis depends on K167, which acts as the Schiff-base intermediate with substrate. V209 lines the pyruvate pocket.

This sequence belongs to the DapA family. As to quaternary structure, homotetramer; dimer of dimers.

Its subcellular location is the cytoplasm. It catalyses the reaction L-aspartate 4-semialdehyde + pyruvate = (2S,4S)-4-hydroxy-2,3,4,5-tetrahydrodipicolinate + H2O + H(+). It functions in the pathway amino-acid biosynthesis; L-lysine biosynthesis via DAP pathway; (S)-tetrahydrodipicolinate from L-aspartate: step 3/4. Its function is as follows. Catalyzes the condensation of (S)-aspartate-beta-semialdehyde [(S)-ASA] and pyruvate to 4-hydroxy-tetrahydrodipicolinate (HTPA). The protein is 4-hydroxy-tetrahydrodipicolinate synthase of Synechococcus elongatus (strain ATCC 33912 / PCC 7942 / FACHB-805) (Anacystis nidulans R2).